Reading from the N-terminus, the 87-residue chain is MANTKSALKRIRQTATRTARNRAVTSKLKTLRKKVAAAVETSDKEAAAAAYNTFSSAVDKAAKVGTIPANRAANYKSKAAKAIAKIA.

The disordered stretch occupies residues 1-26; it reads MANTKSALKRIRQTATRTARNRAVTS. Low complexity predominate over residues 13–23; sequence QTATRTARNRA.

It belongs to the bacterial ribosomal protein bS20 family.

In terms of biological role, binds directly to 16S ribosomal RNA. This is Small ribosomal subunit protein bS20 from Akkermansia muciniphila (strain ATCC BAA-835 / DSM 22959 / JCM 33894 / BCRC 81048 / CCUG 64013 / CIP 107961 / Muc).